The sequence spans 328 residues: GTP 3',8-cyclase (328 aa).

The 229-residue stretch at 1 to 229 (MNQVDYLRIS…ESQVRGAGPA (229 aa)) folds into the Radical SAM core domain. Arg8 lines the GTP pocket. [4Fe-4S] cluster is bound by residues Cys15 and Cys19. An S-adenosyl-L-methionine-binding site is contributed by Tyr21. [4Fe-4S] cluster is bound at residue Cys22. GTP is bound at residue Arg60. Gly64 contributes to the S-adenosyl-L-methionine binding site. Thr91 is a binding site for GTP. Ser115 is a binding site for S-adenosyl-L-methionine. Lys155 contacts GTP. Met189 lines the S-adenosyl-L-methionine pocket. [4Fe-4S] cluster contacts are provided by Cys252 and Cys255. Residue 257–259 (RMR) coordinates GTP. Residue Cys269 coordinates [4Fe-4S] cluster.

It belongs to the radical SAM superfamily. MoaA family. Monomer and homodimer. [4Fe-4S] cluster serves as cofactor.

The enzyme catalyses GTP + AH2 + S-adenosyl-L-methionine = (8S)-3',8-cyclo-7,8-dihydroguanosine 5'-triphosphate + 5'-deoxyadenosine + L-methionine + A + H(+). It participates in cofactor biosynthesis; molybdopterin biosynthesis. Its function is as follows. Catalyzes the cyclization of GTP to (8S)-3',8-cyclo-7,8-dihydroguanosine 5'-triphosphate. The chain is GTP 3',8-cyclase from Nostoc punctiforme (strain ATCC 29133 / PCC 73102).